We begin with the raw amino-acid sequence, 281 residues long: Tetraspanin-5 (281 aa).

At 1–7 (MNRMSNT) the chain is on the cytoplasmic side. Residues 8–28 (VIGFLNILTLISSIVLLGSAL) form a helical membrane-spanning segment. The Extracellular segment spans residues 29-44 (WMGRSKTTCEHFLQKP). Residues 45–65 (LLILGLAILILSVAGLVGACC) form a helical membrane-spanning segment. Over 66–74 (DVAWVLWVY) the chain is Cytoplasmic. A helical transmembrane segment spans residues 75 to 95 (LFFMVFIIVALMGLTLFGFIV). Over 96–221 (TSHSGGVVVD…TVRRDWHKLS (126 aa)) the chain is Extracellular. Residues 222 to 242 (LVNVIVVIFLIAVYCVGCCAF) traverse the membrane as a helical segment. Over 243–281 (KNAKRPQHYGFPYGRYGMSKSRPGWEQSWSRWWHGRDRY) the chain is Cytoplasmic.

This sequence belongs to the tetraspanin (TM4SF) family.

The protein resides in the membrane. Its function is as follows. May be involved in the regulation of cell differentiation. The sequence is that of Tetraspanin-5 (TET5) from Arabidopsis thaliana (Mouse-ear cress).